We begin with the raw amino-acid sequence, 425 residues long: RNA-binding protein L (425 aa).

A compositionally biased stretch (pro residues) spans 1 to 20; it reads MQQPPSQPQPGMGGPPPPPQ. A disordered region spans residues 1–82; the sequence is MQQPPSQPQP…AAPPPQAMPA (82 aa). Residues 21–31 are compositionally biased toward low complexity; that stretch reads GAAGQPPQWGA. A compositionally biased stretch (pro residues) spans 32 to 80; sequence IPPPMPPHQYGAPPPQQPPAMWGQPPPQAHYGQVPPPQPYYAAPPPQAM. RRM domains are found at residues 90–170, 180–259, and 284–356; these read KTLW…WASA, YTIF…PAAN, and TTIF…WGRS.

This sequence belongs to the polyadenylate-binding RBP45 family. As to quaternary structure, interacts with RBP-P. Interacts with RAB5A.

Its subcellular location is the nucleus. It localises to the cytoplasm. Its function is as follows. RNA-binding protein that binds to a cis-localization element or zipcode, within the 5'-CDS of prolamine RNA. Binds strongly to glutelin and prolamin mRNAs, particularly to 3'-UTR and zipcode RNA. Recognizes and binds to glutelin zipcode RNA, which is required for proper mRNA localization to cisternal endoplasmic reticulum. Recognizes and binds to prolamin zipcode RNA, which is required for proper mRNA localization to the protein body endoplasmic reticulum that delimits the prolamine intracisternal inclusion granules. Required for the correct localization of glutelin and prolamine mRNA in endosperm cells during grain development. RBP-L and RBP-P form a quaternary complex with the membrane trafficking factors NSF and RAB5A. This quaternay complex carries glutelin mRNAs for active transport on endosomes to the cortical endoplasmic reticulum membrane, and enables endosome-mediated glutelin mRNA transport in endosperm cells. This Oryza sativa subsp. japonica (Rice) protein is RNA-binding protein L.